The following is a 652-amino-acid chain: Chaperone protein HtpG (652 aa).

The segment at 1–348 (MATDAHKETL…SDDLPLNVSR (348 aa)) is a; substrate-binding. The segment at 349–565 (ELLQHNPLLD…EYDFGMGMQR (217 aa)) is b. Residues 566–652 (LLKAAGHAMP…EAKSNAARGD (87 aa)) form a c region.

It belongs to the heat shock protein 90 family. In terms of assembly, homodimer.

The protein resides in the cytoplasm. Molecular chaperone. Has ATPase activity. This chain is Chaperone protein HtpG, found in Alkalilimnicola ehrlichii (strain ATCC BAA-1101 / DSM 17681 / MLHE-1).